The following is a 153-amino-acid chain: Pheromone-binding protein Gp-9 (153 aa).

Residues 1 to 19 form the signal peptide; sequence MKTFVLHIFIFALVAFASA. 3 cysteine pairs are disulfide-bonded: cysteine 37-cysteine 77, cysteine 73-cysteine 129, and cysteine 118-cysteine 138.

It belongs to the PBP/GOBP family. In terms of assembly, homodimer.

Its subcellular location is the secreted. In terms of biological role, colony queen number, a major feature of social organization, is associated with worker genotype for Gp-9. Colonies are headed by either a single reproductive queen (monogyne form) or multiple queens (polygyne form). Differences in worker Gp-9 genotypes between social forms may cause differences in workers' abilities to recognize queens and regulate their numbers. This Solenopsis richteri (Black imported fire ant) protein is Pheromone-binding protein Gp-9.